The primary structure comprises 298 residues: HTH-type transcriptional regulator ArgP (298 aa).

An HTH lysR-type domain is found at 4–60 (VDYRWVAALDAVIAQRGFERAAEKLCITQSAVSQRIKQLEKLMAQPLLVREQPPRPT). A DNA-binding region (H-T-H motif) is located at residues 21-40 (FERAAEKLCITQSAVSQRIK).

It belongs to the LysR transcriptional regulatory family. As to quaternary structure, homodimer.

Controls the transcription of genes involved in arginine and lysine metabolism. This Photobacterium profundum (strain SS9) protein is HTH-type transcriptional regulator ArgP.